A 340-amino-acid chain; its full sequence is UDP-3-O-(3-hydroxymyristoyl)glucosamine N-acyltransferase (340 aa).

His-239 serves as the catalytic Proton acceptor.

This sequence belongs to the transferase hexapeptide repeat family. LpxD subfamily. Homotrimer.

It carries out the reaction a UDP-3-O-[(3R)-3-hydroxyacyl]-alpha-D-glucosamine + a (3R)-hydroxyacyl-[ACP] = a UDP-2-N,3-O-bis[(3R)-3-hydroxyacyl]-alpha-D-glucosamine + holo-[ACP] + H(+). The enzyme catalyses UDP-3-O-[(3R)-3-hydroxytetradecanoyl]-alpha-D-glucosamine + (3R)-hydroxytetradecanoyl-[ACP] = UDP-2-N,3-O-bis[(3R)-3-hydroxytetradecanoyl]-alpha-D-glucosamine + holo-[ACP] + H(+). The protein operates within glycolipid biosynthesis; lipid IV(A) biosynthesis; lipid IV(A) from (3R)-3-hydroxytetradecanoyl-[acyl-carrier-protein] and UDP-N-acetyl-alpha-D-glucosamine: step 3/6. Its function is as follows. Catalyzes the N-acylation of UDP-3-O-(hydroxytetradecanoyl)glucosamine using 3-hydroxytetradecanoyl-ACP as the acyl donor. Is involved in the biosynthesis of lipid A, a phosphorylated glycolipid that anchors the lipopolysaccharide to the outer membrane of the cell. The chain is UDP-3-O-(3-hydroxymyristoyl)glucosamine N-acyltransferase from Pectobacterium atrosepticum (strain SCRI 1043 / ATCC BAA-672) (Erwinia carotovora subsp. atroseptica).